A 227-amino-acid polypeptide reads, in one-letter code: Tegument protein ORF55 (227 aa).

Residue cysteine 11 is the site of S-palmitoyl cysteine; by host attachment. The interval 183 to 227 (VTRQPEATLPKPPTEDPSVSAMHSSIPPRPSSTLEETTESAIGST) is disordered. Residues 213–227 (SSTLEETTESAIGST) show a composition bias toward polar residues.

This sequence belongs to the herpesviridae UL51 family. As to quaternary structure, oligomerizes. Interacts with ORF42; this interaction mediates ORF42 incorporation to virions. Interacts with vBCL2. Post-translationally, phosphorylated. Palmitoylation is necessary for Golgi localization.

It localises to the virion tegument. Its subcellular location is the host cytoplasm. It is found in the host Golgi apparatus. Functionally, plays several roles during the time course of infection, including egress of virus particles from the perinuclear space and secondary envelopment of cytoplasmic capsids that bud into specific trans-Golgi network (TGN)-derived membranes. This is Tegument protein ORF55 (ORF55) from Homo sapiens (Human).